Reading from the N-terminus, the 572-residue chain is Sulfate adenylyltransferase (572 aa).

Positions 1 to 169 (MANAPHGGVL…IEAVNKLNHY (169 aa)) are N-terminal. The interval 170-393 (DYVALRYTPA…LRESNPPRAT (224 aa)) is catalytic. A sulfate-binding site is contributed by Q197. ATP contacts are provided by residues 197 to 200 (QTRN) and 291 to 294 (GRDH). Catalysis depends on residues T198, R199, and N200. R199 serves as a coordination point for sulfate. A295 serves as a coordination point for sulfate. V333 lines the ATP pocket. Residues 394-572 (QGFTIFLTGY…LESQGFLERQ (179 aa)) form an allosteric regulation domain; adenylyl-sulfate kinase-like region. 3'-phosphoadenylyl sulfate is bound by residues 433–436 (DTVR), R450, 476–477 (IA), and R514.

This sequence in the N-terminal section; belongs to the sulfate adenylyltransferase family. It in the C-terminal section; belongs to the APS kinase family. As to quaternary structure, homohexamer. Dimer of trimers.

The protein resides in the cytoplasm. It carries out the reaction sulfate + ATP + H(+) = adenosine 5'-phosphosulfate + diphosphate. Its pathway is sulfur metabolism; hydrogen sulfide biosynthesis; sulfite from sulfate: step 1/3. Allosterically inhibited by 3'-phosphoadenosine 5'-phosphosulfate (PAPS). Catalyzes the first intracellular reaction of sulfate assimilation, forming adenosine-5'-phosphosulfate (APS) from inorganic sulfate and ATP. Plays an important role in sulfate activation as a component of the biosynthesis pathway of sulfur-containing amino acids. This Penicillium chrysogenum (Penicillium notatum) protein is Sulfate adenylyltransferase.